Consider the following 200-residue polypeptide: Adenylate kinase (200 aa).

10–15 (GAGKGT) is a binding site for ATP. The NMP stretch occupies residues 30–59 (STGDMLRAAVAAGTPVGLEAKSIMESGGLV). AMP-binding positions include Thr31, Arg36, 57–59 (GLV), 85–88 (GFPR), and Gln92. Residues 126–142 (KRAEETAARGQPVRKDD) are LID. Arg127 contacts ATP. Positions 139 and 150 each coordinate AMP. Lys178 serves as a coordination point for ATP.

Belongs to the adenylate kinase family. As to quaternary structure, monomer.

The protein localises to the cytoplasm. It carries out the reaction AMP + ATP = 2 ADP. It functions in the pathway purine metabolism; AMP biosynthesis via salvage pathway; AMP from ADP: step 1/1. Catalyzes the reversible transfer of the terminal phosphate group between ATP and AMP. Plays an important role in cellular energy homeostasis and in adenine nucleotide metabolism. The chain is Adenylate kinase from Methylorubrum populi (strain ATCC BAA-705 / NCIMB 13946 / BJ001) (Methylobacterium populi).